The following is a 251-amino-acid chain: Cyclohexanol dehydrogenase (251 aa).

Positions 42, 95, 161, 165, 194, and 196 each coordinate NAD(+). Catalysis depends on Y161, which acts as the Proton acceptor.

This sequence belongs to the short-chain dehydrogenases/reductases (SDR) family.

It catalyses the reaction cyclohexanol + NAD(+) = cyclohexanone + NADH + H(+). Functionally, catalyzes the oxidation of cyclohexanol to cyclohexanone. Required for the conversion of cyclohexanol to adipic acid. This chain is Cyclohexanol dehydrogenase, found in Acinetobacter sp. (strain SE19).